Consider the following 285-residue polypeptide: MDRSVVPISLAPFQFLLVFWIFLTSVHTNPNKQQKTVVSLSLWWNSKNRIRGCVWFFFLLRVTRTMGQQNLIYSFVARGTVILVEYTEFKGNFTAVAAQCLQKLPSSNNKFTYNCDGHTFNYLVENGFTYCVVAVESVGRQIPMAFLERVKEDFNKRYGGGKATTAQANSLNREFGSKLKEHMQYCVDHPDEISKLAKVKAQVTEVKGVMMENIEKVLDRGEKIELLVDKTENLRSQAQDFRTQGTKIRRKMWFENMKIKLIVLGIIITLILIIILSVCGGFKCT.

The Cytoplasmic segment spans residues 1–261 (MDRSVVPISL…MWFENMKIKL (261 aa)). The region spanning 75 to 179 (FVARGTVILV…SLNREFGSKL (105 aa)) is the Longin domain. Residues 195–255 (KLAKVKAQVT…TKIRRKMWFE (61 aa)) form the v-SNARE coiled-coil homology domain. Residues 262–282 (IVLGIIITLILIIILSVCGGF) traverse the membrane as a helical; Anchor for type IV membrane protein segment. Topologically, residues 283-285 (KCT) are vesicular.

Belongs to the synaptobrevin family. As to expression, expressed in flowers, leaves, stems and roots.

Its subcellular location is the cell membrane. The protein resides in the early endosome membrane. Its function is as follows. Involved in the targeting and/or fusion of transport vesicles to their target membrane. This Arabidopsis thaliana (Mouse-ear cress) protein is Vesicle-associated membrane protein 725.